The primary structure comprises 432 residues: D-amino acid dehydrogenase (432 aa).

Residue 3 to 17 coordinates FAD; that stretch reads VVILGSGVVGVTSAW.

The protein belongs to the DadA oxidoreductase family. Requires FAD as cofactor.

The enzyme catalyses a D-alpha-amino acid + A + H2O = a 2-oxocarboxylate + AH2 + NH4(+). It functions in the pathway amino-acid degradation; D-alanine degradation; NH(3) and pyruvate from D-alanine: step 1/1. Its function is as follows. Oxidative deamination of D-amino acids. The polypeptide is D-amino acid dehydrogenase (Salmonella paratyphi C (strain RKS4594)).